We begin with the raw amino-acid sequence, 451 residues long: Bifunctional protein GlmU (451 aa).

The pyrophosphorylase stretch occupies residues 1-225; it reads MLEIIILAAG…EYEVLGVNNR (225 aa). UDP-N-acetyl-alpha-D-glucosamine is bound by residues 7–10, Lys21, Gln72, 77–78, 99–101, Gly136, Glu150, Asn165, and Asn223; these read LAAG, GT, and YGD. A Mg(2+)-binding site is contributed by Asp101. Asn223 contributes to the Mg(2+) binding site. The segment at 226 to 246 is linker; it reads LQQAELERIFQRQVAEELMVA. Residues 247–451 form an N-acetyltransferase region; sequence GATLLDPARL…IKGWARPVKK (205 aa). Residues Arg329 and Lys347 each coordinate UDP-N-acetyl-alpha-D-glucosamine. His359 serves as the catalytic Proton acceptor. Positions 362 and 373 each coordinate UDP-N-acetyl-alpha-D-glucosamine. Acetyl-CoA contacts are provided by residues Ala376, 382–383, Ser401, Ala419, and Arg436; that span reads NY.

In the N-terminal section; belongs to the N-acetylglucosamine-1-phosphate uridyltransferase family. The protein in the C-terminal section; belongs to the transferase hexapeptide repeat family. As to quaternary structure, homotrimer. The cofactor is Mg(2+).

Its subcellular location is the cytoplasm. The enzyme catalyses alpha-D-glucosamine 1-phosphate + acetyl-CoA = N-acetyl-alpha-D-glucosamine 1-phosphate + CoA + H(+). It catalyses the reaction N-acetyl-alpha-D-glucosamine 1-phosphate + UTP + H(+) = UDP-N-acetyl-alpha-D-glucosamine + diphosphate. It functions in the pathway nucleotide-sugar biosynthesis; UDP-N-acetyl-alpha-D-glucosamine biosynthesis; N-acetyl-alpha-D-glucosamine 1-phosphate from alpha-D-glucosamine 6-phosphate (route II): step 2/2. It participates in nucleotide-sugar biosynthesis; UDP-N-acetyl-alpha-D-glucosamine biosynthesis; UDP-N-acetyl-alpha-D-glucosamine from N-acetyl-alpha-D-glucosamine 1-phosphate: step 1/1. The protein operates within bacterial outer membrane biogenesis; LPS lipid A biosynthesis. In terms of biological role, catalyzes the last two sequential reactions in the de novo biosynthetic pathway for UDP-N-acetylglucosamine (UDP-GlcNAc). The C-terminal domain catalyzes the transfer of acetyl group from acetyl coenzyme A to glucosamine-1-phosphate (GlcN-1-P) to produce N-acetylglucosamine-1-phosphate (GlcNAc-1-P), which is converted into UDP-GlcNAc by the transfer of uridine 5-monophosphate (from uridine 5-triphosphate), a reaction catalyzed by the N-terminal domain. In Saccharophagus degradans (strain 2-40 / ATCC 43961 / DSM 17024), this protein is Bifunctional protein GlmU.